A 109-amino-acid polypeptide reads, in one-letter code: Transcription initiation factor IIA subunit 2 (109 aa).

Belongs to the TFIIA subunit 2 family. In terms of assembly, TFIIA is a heterodimer of the large unprocessed subunit 1 and a small subunit gamma. It was originally believed to be a heterotrimer of an alpha (p35), a beta (p19) and a gamma subunit (p12). Interacts with NCOA6 general coactivator. TFIIA forms a complex with TBP. Interacts with HSF1 (via transactivation domain). Part of TBP-based Pol II pre-initiation complex (PIC), in which Pol II core assembles with general transcription factors and other specific initiation factors including GTF2E1, GTF2E2, GTF2F1, GTF2F2, TCEA1, ERCC2, ERCC3, GTF2H2, GTF2H3, GTF2H4, GTF2H5, GTF2A1, GTF2A2, GTF2B and TBP; this large multi-subunit PIC complex mediates DNA unwinding and targets Pol II core to the transcription start site where the first phosphodiester bond forms. As to quaternary structure, (Microbial infection) Interacts with SV40 Large T antigen.

It localises to the nucleus. TFIIA is a component of the transcription machinery of RNA polymerase II and plays an important role in transcriptional activation. TFIIA in a complex with TBP mediates transcriptional activity. This Homo sapiens (Human) protein is Transcription initiation factor IIA subunit 2 (GTF2A2).